Reading from the N-terminus, the 329-residue chain is L-lactate dehydrogenase (329 aa).

NAD(+)-binding positions include Val-18, Glu-39, Lys-46, Tyr-71, and 85–86 (GA). Substrate contacts are provided by Gln-88 and Arg-94. Residues Ser-107, 124–126 (AAN), and Ser-149 contribute to the NAD(+) site. 126 to 129 (NPVD) is a substrate binding site. Substrate is bound at residue 154 to 157 (DSAR). Beta-D-fructose 1,6-bisphosphate is bound by residues Arg-159 and His-174. The active-site Proton acceptor is the His-181. Phosphotyrosine is present on Tyr-226. Thr-235 contributes to the substrate binding site.

Belongs to the LDH/MDH superfamily. LDH family. As to quaternary structure, homotetramer.

It localises to the cytoplasm. It carries out the reaction (S)-lactate + NAD(+) = pyruvate + NADH + H(+). It participates in fermentation; pyruvate fermentation to lactate; (S)-lactate from pyruvate: step 1/1. Allosterically activated by fructose 1,6-bisphosphate (FBP). In terms of biological role, catalyzes the conversion of lactate to pyruvate. The protein is L-lactate dehydrogenase of Streptococcus equinus (Streptococcus bovis).